Reading from the N-terminus, the 393-residue chain is Thyrotropin-releasing hormone receptor (393 aa).

The Extracellular segment spans residues 1–28; that stretch reads MENDTVSEMNQTELQPQAAVALEYQVVT. 2 N-linked (GlcNAc...) asparagine glycosylation sites follow: asparagine 3 and asparagine 10. The helical transmembrane segment at 29 to 51 threads the bilayer; sequence ILLVVIICGLGIVGNIMVVLVVM. The Cytoplasmic segment spans residues 52–61; sequence RTKHMRTPTN. The chain crosses the membrane as a helical span at residues 62-83; sequence CYLVSLAVADLMVLVAAGLPNI. Residues 84–99 are Extracellular-facing; the sequence is TDSIYGSWVYGYVGCL. The cysteines at positions 98 and 179 are disulfide-linked. The helical transmembrane segment at 100-121 threads the bilayer; sequence CITYLQYLGINASSCSITAFTI. Residues 122-144 lie on the Cytoplasmic side of the membrane; it reads ERYIAICHPIKAQFLCTFSRAKK. A helical transmembrane segment spans residues 145 to 168; that stretch reads IIIFVWAFTSIYCMLWFFLLDLNI. Residues 169–193 are Extracellular-facing; it reads STYKNAVVVSCGYKISRNYYSPIYL. The helical transmembrane segment at 194-215 threads the bilayer; the sequence is MDFGVFYVVPMILATVLYGFIA. Topologically, residues 216–266 are cytoplasmic; the sequence is RILFLNPIPSDPKENSKMWKNDSIHQNKNLNLNATNRCFNSTVSSRKQVTK. The chain crosses the membrane as a helical span at residues 267 to 288; sequence MLAVVVILFALLWMPYRTLVVV. The Extracellular portion of the chain corresponds to 289–296; the sequence is NSFLSSPF. Residues 297 to 319 traverse the membrane as a helical segment; the sequence is QENWFLLFCRICIYLNSAINPVI. The Cytoplasmic portion of the chain corresponds to 320 to 393; that stretch reads YNLMSQKFRA…FDDTCLASEN (74 aa).

The protein belongs to the G-protein coupled receptor 1 family.

The protein localises to the cell membrane. Its function is as follows. Receptor for thyrotropin-releasing hormone (TRH). Upon ligand binding, this G-protein-coupled receptor triggers activation of the phosphatidylinositol (IP3)-calcium-protein kinase C (PKC) pathway. This is Thyrotropin-releasing hormone receptor (Trhr) from Mus musculus (Mouse).